We begin with the raw amino-acid sequence, 1375 residues long: DNA-directed RNA polymerase subunit beta (1375 aa).

It belongs to the RNA polymerase beta chain family. In terms of assembly, the RNAP catalytic core consists of 2 alpha, 1 beta, 1 beta' and 1 omega subunit. When a sigma factor is associated with the core the holoenzyme is formed, which can initiate transcription.

It catalyses the reaction RNA(n) + a ribonucleoside 5'-triphosphate = RNA(n+1) + diphosphate. Its function is as follows. DNA-dependent RNA polymerase catalyzes the transcription of DNA into RNA using the four ribonucleoside triphosphates as substrates. The sequence is that of DNA-directed RNA polymerase subunit beta from Methylorubrum populi (strain ATCC BAA-705 / NCIMB 13946 / BJ001) (Methylobacterium populi).